A 132-amino-acid polypeptide reads, in one-letter code: MTMTDPIADFLTRLRNANSAYHDEVTLPHSKIKANIAEILKSEGYISDYRTEDARVGKSLVVQLKYGPSRERSIAGLRRVSKPGLRVYAKSTNLPRVLGGLGVAIISTSSGLRTDRQASREGVGGEVLAYVW.

Belongs to the universal ribosomal protein uS8 family. As to quaternary structure, part of the 30S ribosomal subunit. Contacts proteins S5 and S12.

In terms of biological role, one of the primary rRNA binding proteins, it binds directly to 16S rRNA central domain where it helps coordinate assembly of the platform of the 30S subunit. The protein is Small ribosomal subunit protein uS8 of Mycolicibacterium gilvum (strain PYR-GCK) (Mycobacterium gilvum (strain PYR-GCK)).